Reading from the N-terminus, the 317-residue chain is MGYDVSRFQGDVDEDLICPICSGVLEEPVQAPHCEHAFCNACITQWFSQQQTCPVDRSVVTVAHLRPVPRIMRNMLSKLQITCDNAVFGCTTIVRLDNLMSHLSDCEHNPKRPVTCEQGCGLEMPKDEVPNHNCIKHLRSVVQQQQIRIGELEKTAAESKHQLSEQKRDIQLLKAYMRAIRSANPNLQNLEETIEYNEILEWVNSLQPARVTRWGGMISTPDAVLQAVIKRSLVESGCPASIVNEIIENAHERNWPQGLATLETRQMNRRYYENYVAKRIPGKQAVVVMACENQHMGEDMVLEPGLVMIFAHGVEEI.

An RING-type; degenerate zinc finger spans residues Cys-18–Arg-57. Residues Ile-135 to Ala-175 are a coiled coil.

The catalysed reaction is S-ubiquitinyl-[E2 ubiquitin-conjugating enzyme]-L-cysteine + [acceptor protein]-L-lysine = [E2 ubiquitin-conjugating enzyme]-L-cysteine + N(6)-ubiquitinyl-[acceptor protein]-L-lysine.. It functions in the pathway protein modification; protein ubiquitination. In terms of biological role, acts as E3 ubiquitin-protein ligase and regulates the degradation of target proteins. The sequence is that of E3 ubiquitin-protein ligase NRDP1 (rnf41) from Xenopus laevis (African clawed frog).